Reading from the N-terminus, the 208-residue chain is Thymidylate kinase (208 aa).

13–20 (GLEGAGKS) is an ATP binding site.

Belongs to the thymidylate kinase family.

It catalyses the reaction dTMP + ATP = dTDP + ADP. Functionally, phosphorylation of dTMP to form dTDP in both de novo and salvage pathways of dTTP synthesis. In Shewanella amazonensis (strain ATCC BAA-1098 / SB2B), this protein is Thymidylate kinase.